We begin with the raw amino-acid sequence, 190 residues long: Ribosome hibernation promotion factor (190 aa).

The protein belongs to the HPF/YfiA ribosome-associated protein family. Long HPF subfamily. In terms of assembly, interacts with 100S ribosomes.

It localises to the cytoplasm. Its function is as follows. Required for dimerization of active 70S ribosomes into 100S ribosomes in stationary phase; 100S ribosomes are translationally inactive and sometimes present during exponential growth. The polypeptide is Ribosome hibernation promotion factor (Staphylococcus saprophyticus subsp. saprophyticus (strain ATCC 15305 / DSM 20229 / NCIMB 8711 / NCTC 7292 / S-41)).